Here is a 206-residue protein sequence, read N- to C-terminus: MPSLLITVLFLNVIIYVINTVGAATVDGLLWLLYIKLPTGTSQIAREQRHMKREVVQLKHEMSSTSSQDEFAKWAKLRRRHDKAMEAYEAKNNELTQSKSTFDMTIKIARWAATSGLMLFLQFWYSKTPIFTLPPGWIPWQVQWVLSFPRAPMGTVSIQIWGGACATVVALVGDAMRASLAYVSKPKIDRIKLGATMEGKEGKKRQ.

Residues 1–4 (MPSL) lie on the Lumenal side of the membrane. The helical transmembrane segment at 5-24 (LITVLFLNVIIYVINTVGAA) threads the bilayer. The Cytoplasmic portion of the chain corresponds to 25–110 (TVDGLLWLLY…TFDMTIKIAR (86 aa)). The stretch at 75 to 100 (AKLRRRHDKAMEAYEAKNNELTQSKS) forms a coiled coil. A helical transmembrane segment spans residues 111-131 (WAATSGLMLFLQFWYSKTPIF). Residues 132-155 (TLPPGWIPWQVQWVLSFPRAPMGT) are Lumenal-facing. Residues 156-172 (VSIQIWGGACATVVALV) traverse the membrane as a helical segment. The Cytoplasmic portion of the chain corresponds to 173-206 (GDAMRASLAYVSKPKIDRIKLGATMEGKEGKKRQ).

Belongs to the WRB/GET1 family. As to quaternary structure, interacts with GET3.

The protein resides in the endoplasmic reticulum membrane. Required for the post-translational delivery of tail-anchored (TA) proteins to the endoplasmic reticulum. Acts as a membrane receptor for soluble GET3, which recognizes and selectively binds the transmembrane domain of TA proteins in the cytosol. The polypeptide is Protein GET1 (Ajellomyces capsulatus (strain NAm1 / WU24) (Darling's disease fungus)).